Reading from the N-terminus, the 286-residue chain is NAD kinase (286 aa).

The active-site Proton acceptor is the aspartate 68. Residues 68 to 69, lysine 73, 142 to 143, arginine 153, aspartate 172, 183 to 188, and glutamine 242 contribute to the NAD(+) site; these read DG, ND, and TGYSFS.

The protein belongs to the NAD kinase family. A divalent metal cation is required as a cofactor.

It is found in the cytoplasm. The enzyme catalyses NAD(+) + ATP = ADP + NADP(+) + H(+). Involved in the regulation of the intracellular balance of NAD and NADP, and is a key enzyme in the biosynthesis of NADP. Catalyzes specifically the phosphorylation on 2'-hydroxyl of the adenosine moiety of NAD to yield NADP. The polypeptide is NAD kinase (Natranaerobius thermophilus (strain ATCC BAA-1301 / DSM 18059 / JW/NM-WN-LF)).